We begin with the raw amino-acid sequence, 583 residues long: uncharacterized protein (583 aa).

This is an uncharacterized protein from Acanthamoeba polyphaga (Amoeba).